The following is a 219-amino-acid chain: Small ribosomal subunit protein uS3 (219 aa).

The KH type-2 domain occupies 39–108 (IKEFIKKNYF…KVTVKVQEIK (70 aa)).

The protein belongs to the universal ribosomal protein uS3 family. In terms of assembly, part of the 30S ribosomal subunit. Forms a tight complex with proteins S10 and S14.

In terms of biological role, binds the lower part of the 30S subunit head. Binds mRNA in the 70S ribosome, positioning it for translation. The polypeptide is Small ribosomal subunit protein uS3 (Fusobacterium nucleatum subsp. nucleatum (strain ATCC 25586 / DSM 15643 / BCRC 10681 / CIP 101130 / JCM 8532 / KCTC 2640 / LMG 13131 / VPI 4355)).